We begin with the raw amino-acid sequence, 225 residues long: Ribonuclease T (225 aa).

The disordered stretch occupies residues 1–21; it reads MSEDHFDDEHEGHGGGGGSRH. The Exonuclease domain maps to 33-207; sequence VVVDVETGGF…YDTEKTAELF (175 aa). Residues aspartate 36, glutamate 38, histidine 194, and aspartate 199 each contribute to the Mg(2+) site. Histidine 194 acts as the Proton donor/acceptor in catalysis.

This sequence belongs to the RNase T family. Homodimer. It depends on Mg(2+) as a cofactor.

Its function is as follows. Trims short 3' overhangs of a variety of RNA species, leaving a one or two nucleotide 3' overhang. Responsible for the end-turnover of tRNA: specifically removes the terminal AMP residue from uncharged tRNA (tRNA-C-C-A). Also appears to be involved in tRNA biosynthesis. In Pseudomonas syringae pv. syringae (strain B728a), this protein is Ribonuclease T.